A 177-amino-acid polypeptide reads, in one-letter code: ATP synthase subunit delta (177 aa).

Belongs to the ATPase delta chain family. In terms of assembly, F-type ATPases have 2 components, F(1) - the catalytic core - and F(0) - the membrane proton channel. F(1) has five subunits: alpha(3), beta(3), gamma(1), delta(1), epsilon(1). F(0) has three main subunits: a(1), b(2) and c(10-14). The alpha and beta chains form an alternating ring which encloses part of the gamma chain. F(1) is attached to F(0) by a central stalk formed by the gamma and epsilon chains, while a peripheral stalk is formed by the delta and b chains.

Its subcellular location is the cell membrane. In terms of biological role, f(1)F(0) ATP synthase produces ATP from ADP in the presence of a proton or sodium gradient. F-type ATPases consist of two structural domains, F(1) containing the extramembraneous catalytic core and F(0) containing the membrane proton channel, linked together by a central stalk and a peripheral stalk. During catalysis, ATP synthesis in the catalytic domain of F(1) is coupled via a rotary mechanism of the central stalk subunits to proton translocation. Functionally, this protein is part of the stalk that links CF(0) to CF(1). It either transmits conformational changes from CF(0) to CF(1) or is implicated in proton conduction. This is ATP synthase subunit delta from Caldanaerobacter subterraneus subsp. tengcongensis (strain DSM 15242 / JCM 11007 / NBRC 100824 / MB4) (Thermoanaerobacter tengcongensis).